Consider the following 382-residue polypeptide: Beta-1,4-galactosyltransferase 6 (382 aa).

Residues 1-15 (MSALKRMMRVSNRSL) are Cytoplasmic-facing. A helical; Signal-anchor for type II membrane protein membrane pass occupies residues 16–35 (IAFIFFFSLSTSCLYFIYVA). The Lumenal portion of the chain corresponds to 36 to 382 (PGIANTYLFM…MPELAPIEDY (347 aa)). N-linked (GlcNAc...) asparagine glycans are attached at residues asparagine 71, asparagine 75, asparagine 83, asparagine 84, asparagine 99, and asparagine 122. Residues cysteine 108 and cysteine 152 are joined by a disulfide bond. UDP-alpha-D-galactose contacts are provided by residues 163-167 (PFRNR), 202-204 (FNR), 229-230 (VD), tyrosine 258, and tryptophan 290. A disulfide bond links cysteine 223 and cysteine 242. Aspartate 230 is a binding site for Mn(2+). An N-acetyl-D-glucosamine-binding site is contributed by 292–295 (GEDD). N-linked (GlcNAc...) asparagine glycosylation occurs at asparagine 307. Histidine 323 lines the Mn(2+) pocket. Position 323-324 (323-324 (HH)) interacts with UDP-alpha-D-galactose. N-acetyl-D-glucosamine is bound at residue arginine 334. Residue asparagine 367 is glycosylated (N-linked (GlcNAc...) asparagine).

The protein belongs to the glycosyltransferase 7 family. Mn(2+) serves as cofactor. It depends on Mg(2+) as a cofactor. Requires Ca(2+) as cofactor. Brain and kidney.

The protein localises to the golgi apparatus. It localises to the golgi stack membrane. The catalysed reaction is a beta-D-glucosyl-(1&lt;-&gt;1')-N-acylsphing-4-enine + UDP-alpha-D-galactose = a beta-D-Gal-(1-&gt;4)-beta-D-Glc-(1&lt;-&gt;1)-Cer(d18:1(4E)) + UDP + H(+). Its pathway is protein modification; protein glycosylation. It participates in sphingolipid metabolism. With respect to regulation, inhibited by EDTA. In terms of biological role, catalyzes the synthesis of lactosylceramide (LacCer) via the transfer of galactose from UDP-galactose to glucosylceramide (GlcCer). LacCer is the starting point in the biosynthesis of all gangliosides (membrane-bound glycosphingolipids) which play pivotal roles in the CNS including neuronal maturation and axonal and myelin formation. The chain is Beta-1,4-galactosyltransferase 6 from Mus musculus (Mouse).